Here is a 235-residue protein sequence, read N- to C-terminus: Sugar fermentation stimulation protein homolog (235 aa).

The protein belongs to the SfsA family.

This chain is Sugar fermentation stimulation protein homolog, found in Aliivibrio fischeri (strain MJ11) (Vibrio fischeri).